A 518-amino-acid chain; its full sequence is Sensor protein kinase HptS (518 aa).

2 consecutive transmembrane segments (helical) span residues 20–40 (IFPV…IYIW) and 222–242 (GITL…FGFI). One can recognise a Histidine kinase domain in the interval 297-513 (EQLIHSIEHT…LICYKIPLSR (217 aa)). Position 325 is a phosphohistidine; by autocatalysis (His-325).

In terms of processing, autophosphorylated.

The protein resides in the cell membrane. The enzyme catalyses ATP + protein L-histidine = ADP + protein N-phospho-L-histidine.. Its function is as follows. Member of the two-component regulatory system HptS/HptR that regulates genes involved in hexose phosphate transport system in response to changes in extracellular phosphate sources. May act as a sensor protein kinase which is autophosphorylated at a histidine residue and transfers its phosphate group to the conserved aspartic acid residue in the regulatory domain of HptS. In turn, HptS antagonizes CcpA-dependent transcription of a subset of CcpA-regulated genes involved in antibiotic susceptibility. This chain is Sensor protein kinase HptS (hptS), found in Staphylococcus aureus (strain USA300).